The chain runs to 401 residues: Bifunctional enzyme IspD/IspF (401 aa).

Residues 1-234 (MQKPPRTAAI…SRLTAALGDI (234 aa)) form a 2-C-methyl-D-erythritol 4-phosphate cytidylyltransferase region. A 2-C-methyl-D-erythritol 2,4-cyclodiphosphate synthase region spans residues 235-401 (RTGTGYDVHA…SPWGAEGQAS (167 aa)). Positions 241 and 243 each coordinate a divalent metal cation. 4-CDP-2-C-methyl-D-erythritol 2-phosphate-binding positions include 241-243 (DVH) and 267-268 (HS). Histidine 275 provides a ligand contact to a divalent metal cation. Residues 289–291 (DIG), 365–368 (TTSE), phenylalanine 372, and arginine 375 contribute to the 4-CDP-2-C-methyl-D-erythritol 2-phosphate site.

This sequence in the N-terminal section; belongs to the IspD/TarI cytidylyltransferase family. IspD subfamily. It in the C-terminal section; belongs to the IspF family. The cofactor is a divalent metal cation.

The catalysed reaction is 2-C-methyl-D-erythritol 4-phosphate + CTP + H(+) = 4-CDP-2-C-methyl-D-erythritol + diphosphate. The enzyme catalyses 4-CDP-2-C-methyl-D-erythritol 2-phosphate = 2-C-methyl-D-erythritol 2,4-cyclic diphosphate + CMP. Its pathway is isoprenoid biosynthesis; isopentenyl diphosphate biosynthesis via DXP pathway; isopentenyl diphosphate from 1-deoxy-D-xylulose 5-phosphate: step 2/6. It participates in isoprenoid biosynthesis; isopentenyl diphosphate biosynthesis via DXP pathway; isopentenyl diphosphate from 1-deoxy-D-xylulose 5-phosphate: step 4/6. In terms of biological role, bifunctional enzyme that catalyzes the formation of 4-diphosphocytidyl-2-C-methyl-D-erythritol from CTP and 2-C-methyl-D-erythritol 4-phosphate (MEP) (IspD), and catalyzes the conversion of 4-diphosphocytidyl-2-C-methyl-D-erythritol 2-phosphate (CDP-ME2P) to 2-C-methyl-D-erythritol 2,4-cyclodiphosphate (ME-CPP) with a corresponding release of cytidine 5-monophosphate (CMP) (IspF). The polypeptide is Bifunctional enzyme IspD/IspF (Rhodopseudomonas palustris (strain HaA2)).